The following is a 254-amino-acid chain: Ubiquinone/menaquinone biosynthesis C-methyltransferase UbiE (254 aa).

S-adenosyl-L-methionine-binding positions include threonine 77, aspartate 98, 126–127, and serine 143; that span reads NA.

This sequence belongs to the class I-like SAM-binding methyltransferase superfamily. MenG/UbiE family.

It carries out the reaction a 2-demethylmenaquinol + S-adenosyl-L-methionine = a menaquinol + S-adenosyl-L-homocysteine + H(+). The catalysed reaction is a 2-methoxy-6-(all-trans-polyprenyl)benzene-1,4-diol + S-adenosyl-L-methionine = a 5-methoxy-2-methyl-3-(all-trans-polyprenyl)benzene-1,4-diol + S-adenosyl-L-homocysteine + H(+). It participates in quinol/quinone metabolism; menaquinone biosynthesis; menaquinol from 1,4-dihydroxy-2-naphthoate: step 2/2. It functions in the pathway cofactor biosynthesis; ubiquinone biosynthesis. Functionally, methyltransferase required for the conversion of demethylmenaquinol (DMKH2) to menaquinol (MKH2) and the conversion of 2-polyprenyl-6-methoxy-1,4-benzoquinol (DDMQH2) to 2-polyprenyl-3-methyl-6-methoxy-1,4-benzoquinol (DMQH2). This is Ubiquinone/menaquinone biosynthesis C-methyltransferase UbiE from Hydrogenovibrio crunogenus (strain DSM 25203 / XCL-2) (Thiomicrospira crunogena).